The chain runs to 197 residues: Imidazoleglycerol-phosphate dehydratase (197 aa).

The protein belongs to the imidazoleglycerol-phosphate dehydratase family.

The protein localises to the cytoplasm. It catalyses the reaction D-erythro-1-(imidazol-4-yl)glycerol 3-phosphate = 3-(imidazol-4-yl)-2-oxopropyl phosphate + H2O. The protein operates within amino-acid biosynthesis; L-histidine biosynthesis; L-histidine from 5-phospho-alpha-D-ribose 1-diphosphate: step 6/9. This is Imidazoleglycerol-phosphate dehydratase from Syntrophomonas wolfei subsp. wolfei (strain DSM 2245B / Goettingen).